Consider the following 556-residue polypeptide: MGVHSFLCSSPWFRMVTDLQKEIQEAVQQRRNFAIISHPDAGKTTLTEKLLLYGGAIQEAGAVKAKRSQRAATSDWMELEKQRGISITSTVLQFNYHDCTINLLDTPGHQDFSEDTYRTLAAADNAVMLEDAAKGLEPQTRKLFEVCRMRNIPIFTFFNKMDRPGREPLELLDEIEQELGLQTYAVNWPIGSGDRFRGVFDRRKQQVHLFERSVHGKRQAKDTTLEWGDPQLADLIEPDLLQQLQDELELLEGVGTEFDLEAIHAGQLTPVFWGSAMTNFGVELFLEAFLDYALKPGARRSSVGDMAPDYPEFSGFVFKLQANMDPRHRDRIAFVRVCTGKFEKDMTVQHARSGRTLRLSRPQKLFGQDREVLDDAYPGDVIGLNNPGMFAIGDTIYTGKRLEYDGIPCFSPEIFAYLRNPNPSKFKPFRKGVSELREEGAVQIMYSADSAKRDPILAAVGQLQLEVVQYRLENEYGVETLLEPLPFSVARWVEGGWDVLEKVGRLFNTTTVKDTWGRPVLLFKNEWNLRQIEADHPELQLRSVAPVAAGQEPIEV.

Residues glutamine 28–glycine 297 enclose the tr-type G domain. GTP-binding positions include serine 37–threonine 44, aspartate 105–histidine 109, and asparagine 159–aspartate 162.

Belongs to the TRAFAC class translation factor GTPase superfamily. Classic translation factor GTPase family. PrfC subfamily.

Its subcellular location is the cytoplasm. Increases the formation of ribosomal termination complexes and stimulates activities of RF-1 and RF-2. It binds guanine nucleotides and has strong preference for UGA stop codons. It may interact directly with the ribosome. The stimulation of RF-1 and RF-2 is significantly reduced by GTP and GDP, but not by GMP. The polypeptide is Peptide chain release factor 3 (Synechococcus elongatus (strain ATCC 33912 / PCC 7942 / FACHB-805) (Anacystis nidulans R2)).